The chain runs to 389 residues: MLLALAQWLQNDASFLRVFSYLTFRAVMATITALLIGLVCGPAVIRKLTAMKVGQAVRKDGPQTHLVKSGTPTMGGVLILLGIAVATLLWADLTNRFIWIVMLVTFGFGVIGWVDDYRKVVYKDPRGMSSREKYFWQSVIGLFAAVYLAFSVSEASNVRVYDLFMAWVRSGLSMGLPPHADLMLPFVKSISYPLGVWGFIVLTYLVIVGASNAVNLTDGLDGLVIMPVVLVGASLGVFAYVMGSSVYSKYLLFPHIAGAGELLIFCSAMGGAGLAFLWFNTHPAQMFMGDVGALALGGALGTVAVIVRQEIVLFIMGGIFVAETLSVMLQVTWFKFTKRRFGEGRRLFKMAPLHHHFELSGWKETQVVVRFWIITLMLCLFGLSTLKLR.

Transmembrane regions (helical) follow at residues 25–45, 73–93, 97–117, 135–155, 190–210, 222–242, 259–279, 287–307, 311–331, and 366–386; these read RAVMATITALLIGLVCGPAVI, TMGGVLILLGIAVATLLWADL, FIWIVMLVTFGFGVIGWVDDY, FWQSVIGLFAAVYLAFSVSEA, ISYPLGVWGFIVLTYLVIVGA, GLVIMPVVLVGASLGVFAYVM, AGELLIFCSAMGGAGLAFLWF, FMGDVGALALGGALGTVAVIV, IVLFIMGGIFVAETLSVMLQV, and QVVVRFWIITLMLCLFGLSTL.

Belongs to the glycosyltransferase 4 family. MraY subfamily. It depends on Mg(2+) as a cofactor.

Its subcellular location is the cell inner membrane. The enzyme catalyses UDP-N-acetyl-alpha-D-muramoyl-L-alanyl-gamma-D-glutamyl-meso-2,6-diaminopimeloyl-D-alanyl-D-alanine + di-trans,octa-cis-undecaprenyl phosphate = di-trans,octa-cis-undecaprenyl diphospho-N-acetyl-alpha-D-muramoyl-L-alanyl-D-glutamyl-meso-2,6-diaminopimeloyl-D-alanyl-D-alanine + UMP. The protein operates within cell wall biogenesis; peptidoglycan biosynthesis. In terms of biological role, catalyzes the initial step of the lipid cycle reactions in the biosynthesis of the cell wall peptidoglycan: transfers peptidoglycan precursor phospho-MurNAc-pentapeptide from UDP-MurNAc-pentapeptide onto the lipid carrier undecaprenyl phosphate, yielding undecaprenyl-pyrophosphoryl-MurNAc-pentapeptide, known as lipid I. The sequence is that of Phospho-N-acetylmuramoyl-pentapeptide-transferase from Paraburkholderia xenovorans (strain LB400).